Reading from the N-terminus, the 99-residue chain is Large ribosomal subunit protein uL23 (99 aa).

The protein belongs to the universal ribosomal protein uL23 family. As to quaternary structure, part of the 50S ribosomal subunit. Contacts protein L29, and trigger factor when it is bound to the ribosome.

In terms of biological role, one of the early assembly proteins it binds 23S rRNA. One of the proteins that surrounds the polypeptide exit tunnel on the outside of the ribosome. Forms the main docking site for trigger factor binding to the ribosome. The protein is Large ribosomal subunit protein uL23 of Francisella tularensis subsp. tularensis (strain SCHU S4 / Schu 4).